The sequence spans 198 residues: ATP synthase subunit b (198 aa).

The helical transmembrane segment at 25–45 (PLSELLIGTLAFGLLVAFFFW) threads the bilayer.

It belongs to the ATPase B chain family. In terms of assembly, F-type ATPases have 2 components, F(1) - the catalytic core - and F(0) - the membrane proton channel. F(1) has five subunits: alpha(3), beta(3), gamma(1), delta(1), epsilon(1). F(0) has three main subunits: a(1), b(2) and c(10-14). The alpha and beta chains form an alternating ring which encloses part of the gamma chain. F(1) is attached to F(0) by a central stalk formed by the gamma and epsilon chains, while a peripheral stalk is formed by the delta and b chains.

Its subcellular location is the cell membrane. F(1)F(0) ATP synthase produces ATP from ADP in the presence of a proton or sodium gradient. F-type ATPases consist of two structural domains, F(1) containing the extramembraneous catalytic core and F(0) containing the membrane proton channel, linked together by a central stalk and a peripheral stalk. During catalysis, ATP synthesis in the catalytic domain of F(1) is coupled via a rotary mechanism of the central stalk subunits to proton translocation. In terms of biological role, component of the F(0) channel, it forms part of the peripheral stalk, linking F(1) to F(0). The sequence is that of ATP synthase subunit b from Frankia alni (strain DSM 45986 / CECT 9034 / ACN14a).